A 114-amino-acid polypeptide reads, in one-letter code: UPF0342 protein LSL_0473 (114 aa).

Belongs to the UPF0342 family.

The protein is UPF0342 protein LSL_0473 of Ligilactobacillus salivarius (strain UCC118) (Lactobacillus salivarius).